A 338-amino-acid polypeptide reads, in one-letter code: tRNA N6-adenosine threonylcarbamoyltransferase (338 aa).

Residues histidine 110 and histidine 114 each contribute to the Fe cation site. Substrate contacts are provided by residues valine 132–glycine 136, aspartate 165, glycine 178, and asparagine 274. Aspartate 298 lines the Fe cation pocket.

The protein belongs to the KAE1 / TsaD family. It depends on Fe(2+) as a cofactor.

The protein resides in the cytoplasm. The enzyme catalyses L-threonylcarbamoyladenylate + adenosine(37) in tRNA = N(6)-L-threonylcarbamoyladenosine(37) in tRNA + AMP + H(+). Required for the formation of a threonylcarbamoyl group on adenosine at position 37 (t(6)A37) in tRNAs that read codons beginning with adenine. Is involved in the transfer of the threonylcarbamoyl moiety of threonylcarbamoyl-AMP (TC-AMP) to the N6 group of A37, together with TsaE and TsaB. TsaD likely plays a direct catalytic role in this reaction. The polypeptide is tRNA N6-adenosine threonylcarbamoyltransferase (Borrelia duttonii (strain Ly)).